Reading from the N-terminus, the 183-residue chain is Translation initiation factor IF-3 (183 aa).

Positions 1 to 13 are enriched in polar residues; it reads MKQPDRNQQQGAK. The tract at residues 1–24 is disordered; it reads MKQPDRNQQQGAKSNRPAINDEIR.

It belongs to the IF-3 family. In terms of assembly, monomer.

The protein resides in the cytoplasm. In terms of biological role, IF-3 binds to the 30S ribosomal subunit and shifts the equilibrium between 70S ribosomes and their 50S and 30S subunits in favor of the free subunits, thus enhancing the availability of 30S subunits on which protein synthesis initiation begins. The polypeptide is Translation initiation factor IF-3 (Acinetobacter baylyi (strain ATCC 33305 / BD413 / ADP1)).